The primary structure comprises 391 residues: D-alanine--D-alanine ligase (391 aa).

The tract at residues 1 to 24 is disordered; the sequence is MSSENLPQSPERAESPQAPRRKPR. The 211-residue stretch at 171–381 folds into the ATP-grasp domain; it reads KRVFLSFGLP…YPELVDRLIQ (211 aa). An ATP-binding site is contributed by 207–262; that stretch reads AGEHGWPLFIKPARGGSSMGITKVDSVEGLDAAIEEARRHDPKFLVESLLRGREIE. Positions 335, 348, and 350 each coordinate Mg(2+).

This sequence belongs to the D-alanine--D-alanine ligase family. Requires Mg(2+) as cofactor. Mn(2+) serves as cofactor.

Its subcellular location is the cytoplasm. The enzyme catalyses 2 D-alanine + ATP = D-alanyl-D-alanine + ADP + phosphate + H(+). Its pathway is cell wall biogenesis; peptidoglycan biosynthesis. Its function is as follows. Cell wall formation. The polypeptide is D-alanine--D-alanine ligase (Streptomyces griseus subsp. griseus (strain JCM 4626 / CBS 651.72 / NBRC 13350 / KCC S-0626 / ISP 5235)).